The sequence spans 645 residues: UPF0313 protein CLM_0251 (645 aa).

Positions A295–S566 constitute a Radical SAM core domain. The [4Fe-4S] cluster site is built by C309, C313, and C316. The disordered stretch occupies residues N598–K645. The segment covering P600–N609 has biased composition (basic residues). A compositionally biased stretch (low complexity) spans A610–N624. Residues K632–K645 show a composition bias toward basic residues.

This sequence belongs to the UPF0313 family. Requires [4Fe-4S] cluster as cofactor.

This Clostridium botulinum (strain Kyoto / Type A2) protein is UPF0313 protein CLM_0251.